A 207-amino-acid chain; its full sequence is Na(+)-translocating NADH-quinone reductase subunit D (207 aa).

6 helical membrane-spanning segments follow: residues 20 to 40 (IALQ…LQTA), 41 to 61 (FVMA…ISMI), 69 to 89 (IRII…DQIL), 102 to 122 (VFVG…AFAM), 130 to 150 (FVDG…VAFL), and 177 to 197 (NGLF…IWAI).

It belongs to the NqrDE/RnfAE family. In terms of assembly, composed of six subunits; NqrA, NqrB, NqrC, NqrD, NqrE and NqrF.

Its subcellular location is the cell inner membrane. It catalyses the reaction a ubiquinone + n Na(+)(in) + NADH + H(+) = a ubiquinol + n Na(+)(out) + NAD(+). In terms of biological role, NQR complex catalyzes the reduction of ubiquinone-1 to ubiquinol by two successive reactions, coupled with the transport of Na(+) ions from the cytoplasm to the periplasm. NqrA to NqrE are probably involved in the second step, the conversion of ubisemiquinone to ubiquinol. This is Na(+)-translocating NADH-quinone reductase subunit D from Haemophilus ducreyi (strain 35000HP / ATCC 700724).